Consider the following 312-residue polypeptide: Phospholipid phosphatase 3 (312 aa).

Over 1–33 the chain is Cytoplasmic; the sequence is MQSYKYDKAIVPESKNGGSPALNNNPRKGGSKR. Position 19 is a phosphoserine (serine 19). Residues 34 to 54 form a helical membrane-spanning segment; the sequence is VLLICLDLFCLFMAALPFLII. Topologically, residues 55-85 are extracellular; the sequence is ETSTIKPYRRGFYCNDESIKYPLKVSETIND. Residues 86–106 traverse the membrane as a helical segment; the sequence is AVLCAVGIVIAILAIITGEFY. Topologically, residues 107–123 are cytoplasmic; it reads RIYYLKEKSRSTTQNPY. A Dityrosine basolateral targeting motif motif is present at residues 109–110; sequence YY. Residues 124-144 form a helical membrane-spanning segment; it reads VAALYKQVGCFLFGCAISQSF. Over 145 to 194 the chain is Extracellular; that stretch reads TDIAKVSIGRLRPHFLSVCDPDFSQINCSEGYIQNYRCRGEDSKVQEARK. Residues 149–157 form a phosphatase sequence motif I region; it reads KVSIGRLRP. The N-linked (GlcNAc...) asparagine glycan is linked to asparagine 171. An Integrin-binding motif motif is present at residues 183 to 185; sequence RGE. A helical transmembrane segment spans residues 195–215; it reads SFFSGHASFSMFTMLYLVLYL. Positions 197-200 are phosphatase sequence motif II; sequence FSGH. Histidine 200 (proton donors) is an active-site residue. Topologically, residues 216–226 are cytoplasmic; that stretch reads QARFTWRGARL. Residues 227 to 244 traverse the membrane as a helical segment; sequence LRPLLQFTLLMMAFYTGL. Residues 245–256 are phosphatase sequence motif III; sequence SRVSDYKHHPSD. Topologically, residues 245 to 258 are extracellular; the sequence is SRVSDYKHHPSDVL. The Nucleophile role is filled by histidine 252. A helical transmembrane segment spans residues 259–279; the sequence is AGFAQGALVACCIVFFVSDLF. Positions 276-312 are mediates interaction with CTNND1; that stretch reads SDLFKTKTSLSLPAPAIRREILSPVDIIDRNNHHNMV. At 280-312 the chain is on the cytoplasmic side; that stretch reads KTKTSLSLPAPAIRREILSPVDIIDRNNHHNMV.

Belongs to the PA-phosphatase related phosphoesterase family. In terms of assembly, forms functional homodimers and homooligomers that are not required for substrate recognition and catalytic activity. Can also form heterooligomers with other PLPP2 and PLPP3. Interacts with CTNND1; negatively regulates the PLPP3-mediated stabilization of beta-catenin/CTNNB1. N-glycosylated. Contains high-mannose oligosaccharides. In terms of tissue distribution, detected in lung, cerebellum and heart atrium.

Its subcellular location is the cell membrane. It localises to the basolateral cell membrane. The protein resides in the endoplasmic reticulum membrane. It is found in the endoplasmic reticulum-Golgi intermediate compartment membrane. The protein localises to the golgi apparatus membrane. Its subcellular location is the golgi apparatus. It localises to the trans-Golgi network membrane. The protein resides in the membrane raft. It carries out the reaction a 1,2-diacyl-sn-glycero-3-phosphate + H2O = a 1,2-diacyl-sn-glycerol + phosphate. The enzyme catalyses 1,2-dihexadecanoyl-sn-glycero-3-phosphate + H2O = 1,2-dihexadecanoyl-sn-glycerol + phosphate. The catalysed reaction is 1,2-di-(9Z-octadecenoyl)-sn-glycero-3-phosphate + H2O = 1,2-di-(9Z-octadecenoyl)-sn-glycerol + phosphate. It catalyses the reaction a monoacyl-sn-glycero-3-phosphate + H2O = a monoacylglycerol + phosphate. It carries out the reaction (9Z)-octadecenoyl-sn-glycero-3-phosphate + H2O = (9Z-octadecenoyl)-glycerol + phosphate. The enzyme catalyses sphing-4-enine 1-phosphate + H2O = sphing-4-enine + phosphate. The catalysed reaction is an N-acylsphing-4-enine 1-phosphate + H2O = an N-acylsphing-4-enine + phosphate. It catalyses the reaction N-(octanoyl)-sphing-4-enine-1-phosphate + H2O = N-octanoylsphing-4-enine + phosphate. It carries out the reaction N-(9Z-octadecenoyl)-ethanolamine phosphate + H2O = N-(9Z-octadecenoyl) ethanolamine + phosphate. Its pathway is lipid metabolism; phospholipid metabolism. Magnesium-independent phospholipid phosphatase. Insensitive to N-ethylmaleimide. Its function is as follows. Magnesium-independent phospholipid phosphatase of the plasma membrane that catalyzes the dephosphorylation of a variety of glycerolipid and sphingolipid phosphate esters including phosphatidate/PA, lysophosphatidate/LPA, diacylglycerol pyrophosphate/DGPP, sphingosine 1-phosphate/S1P and ceramide 1-phosphate/C1P. Also acts on N-oleoyl ethanolamine phosphate/N-(9Z-octadecenoyl)-ethanolamine phosphate, a potential physiological compound. Has both an extracellular and an intracellular phosphatase activity, allowing the hydrolysis and the cellular uptake of these bioactive lipid mediators from the milieu, regulating signal transduction in different cellular processes. Through the dephosphorylation of extracellular sphingosine-1-phosphate and the regulation of its extra- and intracellular availability, plays a role in vascular homeostasis, regulating endothelial cell migration, adhesion, survival, proliferation and the production of pro-inflammatory cytokines. By maintaining the appropriate levels of this lipid in the cerebellum, also ensure its proper development and function. Through its intracellular lipid phosphatase activity may act in early compartments of the secretory pathway, regulating the formation of Golgi to endoplasmic reticulum retrograde transport carriers. Independently of this phosphatase activity may also function in the Wnt signaling pathway and the stabilization of beta-catenin/CTNNB1, thereby regulating cell proliferation, migration and differentiation in angiogenesis or yet in tumor growth. Also plays a role in integrin-mediated cell-cell adhesion in angiogenesis. The sequence is that of Phospholipid phosphatase 3 from Mus musculus (Mouse).